Here is a 706-residue protein sequence, read N- to C-terminus: Glycine--tRNA ligase beta subunit (706 aa).

The protein belongs to the class-II aminoacyl-tRNA synthetase family. Tetramer of two alpha and two beta subunits.

The protein resides in the cytoplasm. The enzyme catalyses tRNA(Gly) + glycine + ATP = glycyl-tRNA(Gly) + AMP + diphosphate. The polypeptide is Glycine--tRNA ligase beta subunit (Acidobacterium capsulatum (strain ATCC 51196 / DSM 11244 / BCRC 80197 / JCM 7670 / NBRC 15755 / NCIMB 13165 / 161)).